A 175-amino-acid chain; its full sequence is Crossover junction endodeoxyribonuclease RuvC (175 aa).

Active-site residues include D16, E76, and D148. Mg(2+) contacts are provided by D16, E76, and D148.

The protein belongs to the RuvC family. Homodimer which binds Holliday junction (HJ) DNA. The HJ becomes 2-fold symmetrical on binding to RuvC with unstacked arms; it has a different conformation from HJ DNA in complex with RuvA. In the full resolvosome a probable DNA-RuvA(4)-RuvB(12)-RuvC(2) complex forms which resolves the HJ. Requires Mg(2+) as cofactor.

Its subcellular location is the cytoplasm. It catalyses the reaction Endonucleolytic cleavage at a junction such as a reciprocal single-stranded crossover between two homologous DNA duplexes (Holliday junction).. Its function is as follows. The RuvA-RuvB-RuvC complex processes Holliday junction (HJ) DNA during genetic recombination and DNA repair. Endonuclease that resolves HJ intermediates. Cleaves cruciform DNA by making single-stranded nicks across the HJ at symmetrical positions within the homologous arms, yielding a 5'-phosphate and a 3'-hydroxyl group; requires a central core of homology in the junction. The consensus cleavage sequence is 5'-(A/T)TT(C/G)-3'. Cleavage occurs on the 3'-side of the TT dinucleotide at the point of strand exchange. HJ branch migration catalyzed by RuvA-RuvB allows RuvC to scan DNA until it finds its consensus sequence, where it cleaves and resolves the cruciform DNA. The polypeptide is Crossover junction endodeoxyribonuclease RuvC (Bradyrhizobium sp. (strain ORS 278)).